The following is a 122-amino-acid chain: Small ribosomal subunit protein uS13 (122 aa).

Positions 99–122 (RGQRTHTNARTRKGPAKAIAGKKK) are disordered.

Belongs to the universal ribosomal protein uS13 family. Part of the 30S ribosomal subunit. Forms a loose heterodimer with protein S19. Forms two bridges to the 50S subunit in the 70S ribosome.

In terms of biological role, located at the top of the head of the 30S subunit, it contacts several helices of the 16S rRNA. In the 70S ribosome it contacts the 23S rRNA (bridge B1a) and protein L5 of the 50S subunit (bridge B1b), connecting the 2 subunits; these bridges are implicated in subunit movement. Contacts the tRNAs in the A and P-sites. In Parvibaculum lavamentivorans (strain DS-1 / DSM 13023 / NCIMB 13966), this protein is Small ribosomal subunit protein uS13.